The sequence spans 1055 residues: MSGSYPFIDIAALDSIREGFAKGDAQLVLTHDLSAVLWVNGPGAKLFGFDRVEDMIGGGLDLPIATRRQIASSNSNAEGETRTVSVRLGGGLRSDLTRFSVSHITLPDGVSGLLLTADGKDAEAEDIISGLSDDSTHIALIDANSRVIAASPRFAALDISSTTLEDLVIEAADATDRIVKRRIRAGKHSVPGAIARLTDTPPMHLLCIIGDAPVATLEAPAALQGEAEEILEEILPEPVESANTEDASTDQQKPRSFVFEQDAPPARFIWKVGPDGTFSEISPDLAATIGPNAADVVGRRFADVANVFGFDPDGSIAALLDKRDTWSGKRLMWPVEGTDLRVPVELAALPVYSRDREFTGFRGFGLVRPAEAEKDPEEIGLVLAGGIPQARKPVSEPVETATPVEDDDVLALGEEVANDDSPVATLPKPPLDIAPTPGRRESDKVISLLNACAEEKVAADQARMLKEREREERPEGGLTKTERNAFREIADRLRKQGLANSRAETETVAISDEPVIDSSQPVEKTEVKASLIDEVTADEASLPSSGMAYGDETALLANLPVPVIIHSGDKIHYVNQALLDLTGYESLDDIRGAGGVDVLFNSESDDGETRQGMVLRRANGSEEPVDAHLNAISWREGRALMLSLMPVAAAPVSVEAVAAPAEAPVAIDKDDEKQALADHVEELKTILDTATDGVVLIDPEGRIRSMNHSASALFGYERDETEGKFFSMLFAIESQRAAMDYLHGLSGNGVLSVLNDGREVIGREAKGGFIPLFMTIGKLPHTRGFCAVLRDITQWKRTEEELTNARKEAERASSQKTEFLARISHEIRTPLNAIIGFSELMADEKFGSIGNDRYRDYLRDINRSGNHVLALVNDLLDISKIEAGALDMQFEAVSLNDAIAEAIALMQPQANRERVIIRSSFQSNLPDIVADTRSIKQVALNLLSNAVRFTAPGGQVIVSTSYEMNGDVVMRVRDTGIGMTKSEVEQALKPFRQVNALERRKAETAKDWRSEGTGLGLPLTKAMVEANRAQFAIDSTPGHGTVVEIAFPPTRVLAD.

The interval 1–626 (MSGSYPFIDI…RANGSEEPVD (626 aa)) is important for polar localization. The segment at 419 to 439 (DDSPVATLPKPPLDIAPTPGR) is disordered. The interaction with DivK stretch occupies residues 627 to 1055 (AHLNAISWRE…AFPPTRVLAD (429 aa)). The PAS domain occupies 679–750 (HVEELKTILD…YLHGLSGNGV (72 aa)). The 230-residue stretch at 822–1051 (RISHEIRTPL…VVEIAFPPTR (230 aa)) folds into the Histidine kinase domain. Position 825 is a phosphohistidine; by autocatalysis (His825).

In terms of assembly, interacts with DivK.

The protein resides in the cytoplasm. The enzyme catalyses ATP + protein L-histidine = ADP + protein N-phospho-L-histidine.. Functionally, functions as a polar differentiation marker. Essential protein that, by localizing in the old pole of dividing cells, controls cell division and maturation, probably through control of DivK phosphorylation status and cellular distribution, which in turn regulates CtrA, a transcriptional regulator of the minB operon. The asymmetrical localization of this protein is probably required for cells to enter a new division cycle. This is Cell-division control histidine kinase PdhS (pdhS) from Brucella anthropi (strain ATCC 49188 / DSM 6882 / CCUG 24695 / JCM 21032 / LMG 3331 / NBRC 15819 / NCTC 12168 / Alc 37) (Ochrobactrum anthropi).